The primary structure comprises 729 residues: E3 ubiquitin-protein ligase SH3RF2 (729 aa).

The segment at 12-53 (CPVCFEKLDVTAKVLPCQHTFCKPCLQRVFKAHKELRCPECR) adopts an RING-type zinc-finger fold. Residues 78–105 (SGQSSGRGGSFRRPGTMTLQDGRKSRTN) are disordered. SH3 domains lie at 125-184 (DGVP…VIKQ) and 187-252 (QPPP…PNLT). The interval 258-297 (EKNKGRQSSRTKNLSLVSSSSRGNTSTLRRGPGSRRKVPG) is disordered. Residues 263–285 (RQSSRTKNLSLVSSSSRGNTSTL) are compositionally biased toward polar residues. Residues 370-459 (VVSLPGSQQH…RSPGLYTTWT (90 aa)) are interaction with PAK4. One can recognise an SH3 3 domain in the interval 380–441 (LSANMFVALH…PNNYVIPIFR (62 aa)). 2 disordered regions span residues 497-526 (STAG…QRPL) and 610-677 (KSEP…SQPE). A compositionally biased stretch (polar residues) spans 517 to 526 (RKNGSLQRPL). The segment at 641–646 (KTVRFQ) is interaction with PPP1CA. At Ser-649 the chain carries Phosphoserine.

This sequence belongs to the SH3RF family. In terms of assembly, interacts with FASLG and PPP1CA. Interacts with PAK4 and TNFRSF1A. Interacts with DLK1, MAP3K10/MLK2, MAPK8IP1/JIP1, MAPK8IP2/JIP2 and MAPK8IP3/JIP3. Interacts with RAC1 (both active GTP- or inactive GDP-bound forms). In terms of processing, autoubiquitinated. Heart (at protein level). Up-regulated in colon cancer tissues as compared to normal colon tissues (at protein level). Testis. In the heart, present in the apex, left atrium, right atrium, left ventricle and right ventricle, but not in the aorta.

It localises to the nucleus. It catalyses the reaction S-ubiquitinyl-[E2 ubiquitin-conjugating enzyme]-L-cysteine + [acceptor protein]-L-lysine = [E2 ubiquitin-conjugating enzyme]-L-cysteine + N(6)-ubiquitinyl-[acceptor protein]-L-lysine.. The protein operates within protein modification; protein ubiquitination. Functionally, has E3 ubiquitin-protein ligase activity. Acts as an anti-apoptotic regulator of the JNK pathway by ubiquitinating and promoting the degradation of SH3RF1, a scaffold protein that is required for pro-apoptotic JNK activation. Facilitates TNF-alpha-mediated recruitment of adapter proteins TRADD and RIPK1 to TNFRSF1A and regulates PAK4 protein stability via inhibition of its ubiquitin-mediated proteasomal degradation. Inhibits PPP1CA phosphatase activity. This chain is E3 ubiquitin-protein ligase SH3RF2 (SH3RF2), found in Homo sapiens (Human).